Consider the following 454-residue polypeptide: Chromosomal replication initiator protein DnaA (454 aa).

The domain I, interacts with DnaA modulators stretch occupies residues 1-74 (MFDLEKFWDS…IQSAYAYAGI (74 aa)). Residues 74 to 116 (IDIYPVFVVKNGPTPSSERMLEPQPQAKPEKARPQGREFTKDL) are domain II. The tract at residues 88 to 112 (PSSERMLEPQPQAKPEKARPQGREF) is disordered. Over residues 101–112 (KPEKARPQGREF) the composition is skewed to basic and acidic residues. The tract at residues 117 to 333 (RLNEKYTFEN…GALVKVQAQA (217 aa)) is domain III, AAA+ region. The ATP site is built by Gly-161, Gly-163, Lys-164, and Thr-165. The tract at residues 334–454 (TIQKQDINIG…VSDLRQMLER (121 aa)) is domain IV, binds dsDNA.

It belongs to the DnaA family. Oligomerizes as a right-handed, spiral filament on DNA at oriC.

Its subcellular location is the cytoplasm. In terms of biological role, plays an essential role in the initiation and regulation of chromosomal replication. ATP-DnaA binds to the origin of replication (oriC) to initiate formation of the DNA replication initiation complex once per cell cycle. Binds the DnaA box (a 9 base pair repeat at the origin) and separates the double-stranded (ds)DNA. Forms a right-handed helical filament on oriC DNA; dsDNA binds to the exterior of the filament while single-stranded (ss)DNA is stabiized in the filament's interior. The ATP-DnaA-oriC complex binds and stabilizes one strand of the AT-rich DNA unwinding element (DUE), permitting loading of DNA polymerase. After initiation quickly degrades to an ADP-DnaA complex that is not apt for DNA replication. Binds acidic phospholipids. This chain is Chromosomal replication initiator protein DnaA, found in Lactobacillus delbrueckii subsp. bulgaricus (strain ATCC 11842 / DSM 20081 / BCRC 10696 / JCM 1002 / NBRC 13953 / NCIMB 11778 / NCTC 12712 / WDCM 00102 / Lb 14).